The primary structure comprises 88 residues: Antitoxin HipB (88 aa).

In terms of domain architecture, HTH cro/C1-type spans 17–71 (MKLVRQQNGWTQSELAKKIGIKQATISNFENNPDNTTLTTFFKILQSLELSMTLC). A DNA-binding region (H-T-H motif) is located at residues 21 to 47 (RQQNGWTQSELAKKIGIKQATISNFEN).

In terms of assembly, homodimer. Binds operator DNA sites in the absence of HipA, inducing a 70 degree bend in consecutive operators and deforming DNA between the operators so that HipB dimers bind on opposite faces of the DNA. Forms a HipA(2)HipB(2) heterotetramer which can interact with a single operator site on DNA, inducing a 70 degree bend. When 2 operators are present each HipB dimer contacts 1 HipA molecule, which are brought together by the DNA bend and dimerize, blocking the HipA active site and inactivating its toxic activity. HipA-HipB-induced bending also distorts the -35 and -10 boxes of the promoter and probably prevents sigma-factor binding, and additionally bound HipB and HipA block RNA polymerase access to the -35 box, thus repressing the operon. This complex also blocks the toxic activity of HipA. Mutations present in allele hipA7 (G22S and D291A) decrease the affinity of HipA for HipB. Post-translationally, degraded by Lon protease in vivo; half-life is 17 minutes in wild-type cells and over 200 minutes in a lon deletion strain. In vitro degradation by Lon is Mg(2+)-ATP-dependent.

Degraded by Lon protease; degradation is inhibited in a HipA-HipB complex and when bound to the operator consensus sequence dsDNA. Functionally, antitoxin component of a type II toxin-antitoxin (TA) system. Neutralizes the toxic effect of cognate toxin HipA. Also neutralizes the toxic effect of non-cognate toxin YjjJ. Binds to operator sites with the consensus sequence 5-'TATCCN(8)GGATA-3' to repress the hipBA operon promoter; binding of HipB(2) to DNA induces a 70 degree bend. This forces HipA dimerization, which blocks HipA's active site and thus its toxic action. May play a role in biofilm formation. This Escherichia coli (strain K12) protein is Antitoxin HipB (hipB).